A 219-amino-acid polypeptide reads, in one-letter code: Pyridoxine/pyridoxamine 5'-phosphate oxidase (219 aa).

A disordered region spans residues 1–23 (MTSSVIPPSPSAADYAAEGDRPL). FMN contacts are provided by residues 66–71 (RIVLLK), 81–82 (FT), lysine 88, and glutamine 110. Lysine 71 lines the substrate pocket. Substrate-binding residues include tyrosine 128, arginine 132, and serine 136. Residues 145–146 (QS) and tryptophan 191 contribute to the FMN site. 197 to 199 (RMH) is a binding site for substrate. Residue arginine 201 coordinates FMN.

Belongs to the pyridoxamine 5'-phosphate oxidase family. As to quaternary structure, homodimer. Requires FMN as cofactor.

It carries out the reaction pyridoxamine 5'-phosphate + O2 + H2O = pyridoxal 5'-phosphate + H2O2 + NH4(+). The catalysed reaction is pyridoxine 5'-phosphate + O2 = pyridoxal 5'-phosphate + H2O2. The protein operates within cofactor metabolism; pyridoxal 5'-phosphate salvage; pyridoxal 5'-phosphate from pyridoxamine 5'-phosphate: step 1/1. It participates in cofactor metabolism; pyridoxal 5'-phosphate salvage; pyridoxal 5'-phosphate from pyridoxine 5'-phosphate: step 1/1. In terms of biological role, catalyzes the oxidation of either pyridoxine 5'-phosphate (PNP) or pyridoxamine 5'-phosphate (PMP) into pyridoxal 5'-phosphate (PLP). This chain is Pyridoxine/pyridoxamine 5'-phosphate oxidase, found in Hyphomonas neptunium (strain ATCC 15444).